The primary structure comprises 209 residues: MANKKRSASSSRWLQEHFSDKYVLQAQKKGLRSRAWFKLDEIQQSDKLFKPGMTVVDLGAAPGGWSQYVVTQIGGKGRIIACDILPMDPIVGVDFLQGDFRDELVLKALLERVGDSKVQVVMSDMAPNMSGTPAVDIPKSMYLVELALGMCRDVLAPGGSFLVKVFQGEGFDEYLREIRSLFTKVKIRKPDASRARSREVYIVATGRKL.

Residues Gly-63, Trp-65, Asp-83, Asp-99, and Asp-124 each contribute to the S-adenosyl-L-methionine site. Lys-164 serves as the catalytic Proton acceptor.

It belongs to the class I-like SAM-binding methyltransferase superfamily. RNA methyltransferase RlmE family.

It is found in the cytoplasm. The catalysed reaction is uridine(2552) in 23S rRNA + S-adenosyl-L-methionine = 2'-O-methyluridine(2552) in 23S rRNA + S-adenosyl-L-homocysteine + H(+). Specifically methylates the uridine in position 2552 of 23S rRNA at the 2'-O position of the ribose in the fully assembled 50S ribosomal subunit. The polypeptide is Ribosomal RNA large subunit methyltransferase E (Pectobacterium atrosepticum (strain SCRI 1043 / ATCC BAA-672) (Erwinia carotovora subsp. atroseptica)).